The primary structure comprises 92 residues: Small ribosomal subunit protein bS20 (92 aa).

It belongs to the bacterial ribosomal protein bS20 family.

Binds directly to 16S ribosomal RNA. The chain is Small ribosomal subunit protein bS20 from Persephonella marina (strain DSM 14350 / EX-H1).